A 436-amino-acid polypeptide reads, in one-letter code: MFESKINPLWQSFILAVQEEVKPALGCTEPISLALAAAAAAAELDGTVERIDAWVSPNLMKNGMGVTVPGTGMVGLPIAAALGALGGDAKAGLEVLKDASAKAVADAKAMLASGHVAVMLQEPCNDILFSRAKVYSGDSWACVTIVGDHTNIVRIETNKGVVFTQADNAQEEEKNSPLGVLSHTSLEEILAFVNAVPFDAIRFILDAARLNGALSQEGLRGSWGLHIGSTLAKQCDRGLLAKDLSTAILIRTSAASDARMGGATLPAMSNSGSGNQGITATVPVMVVAEHVGADDERLARALMLSHLSAIYIHHQLPRLSALCAATTAAMGAAAGMAWLIDGRYDTIAMAISSMIGDVSGMICDGASNSCAMKVSTSASAAWKAVLMALDDTAVTGNEGIVAHNVEQSIANLCSLACRSMQQTDKQIIEIMASKAH.

Belongs to the UPF0597 family.

This is UPF0597 protein YhaM from Salmonella gallinarum (strain 287/91 / NCTC 13346).